Here is a 473-residue protein sequence, read N- to C-terminus: 3-isopropylmalate dehydratase large subunit (473 aa).

The [4Fe-4S] cluster site is built by Cys-351, Cys-414, and Cys-417.

Belongs to the aconitase/IPM isomerase family. LeuC type 1 subfamily. In terms of assembly, heterodimer of LeuC and LeuD. The cofactor is [4Fe-4S] cluster.

The catalysed reaction is (2R,3S)-3-isopropylmalate = (2S)-2-isopropylmalate. The protein operates within amino-acid biosynthesis; L-leucine biosynthesis; L-leucine from 3-methyl-2-oxobutanoate: step 2/4. In terms of biological role, catalyzes the isomerization between 2-isopropylmalate and 3-isopropylmalate, via the formation of 2-isopropylmaleate. This chain is 3-isopropylmalate dehydratase large subunit, found in Acidovorax sp. (strain JS42).